The primary structure comprises 131 residues: Ribosome-binding factor A (131 aa).

The protein belongs to the RbfA family. As to quaternary structure, monomer. Binds 30S ribosomal subunits, but not 50S ribosomal subunits or 70S ribosomes.

The protein resides in the cytoplasm. Its function is as follows. One of several proteins that assist in the late maturation steps of the functional core of the 30S ribosomal subunit. Associates with free 30S ribosomal subunits (but not with 30S subunits that are part of 70S ribosomes or polysomes). Required for efficient processing of 16S rRNA. May interact with the 5'-terminal helix region of 16S rRNA. The sequence is that of Ribosome-binding factor A from Picosynechococcus sp. (strain ATCC 27264 / PCC 7002 / PR-6) (Agmenellum quadruplicatum).